Here is an 866-residue protein sequence, read N- to C-terminus: Dimethylglycine dehydrogenase, mitochondrial (866 aa).

The N-terminal 50 residues, 1–50 (MLRPGAQLLRGLLLRSCPLQGSPGRPRSVCGREGEEKPPLSAETQWKDRA), are a transit peptide targeting the mitochondrion. The interval 20 to 42 (QGSPGRPRSVCGREGEEKPPLSA) is disordered. FAD contacts are provided by residues 59–60 (CV), 80–81 (EK), and 87–95 (GSTWHAAGL). Residue histidine 91 is modified to Tele-8alpha-FAD histidine. Lysine 114 is subject to N6-acetyllysine. Position 148 is an N6-acetyllysine; alternate (lysine 148). The residue at position 148 (lysine 148) is an N6-succinyllysine; alternate. Lysine 168 is modified (N6-acetyllysine). Residue valine 219 coordinates FAD. An N6-acetyllysine modification is found at lysine 223. Tryptophan 251 is an FAD binding site. An N6-succinyllysine mark is found at lysine 317 and lysine 319. 2 positions are modified to N6-acetyllysine: lysine 335 and lysine 360. An FAD-binding site is contributed by 397–402 (FGYGII). An N6-acetyllysine; alternate mark is found at lysine 434 and lysine 523. 2 positions are modified to N6-succinyllysine; alternate: lysine 434 and lysine 523. 580-582 (ELT) provides a ligand contact to (6S)-5,6,7,8-tetrahydrofolate. N6-acetyllysine; alternate is present on lysine 655. Residue lysine 655 is modified to N6-succinyllysine; alternate. Residues tyrosine 676, 683–685 (ELY), and tyrosine 744 contribute to the (6S)-5,6,7,8-tetrahydrofolate site. N6-acetyllysine is present on lysine 764. Residue lysine 795 is modified to N6-succinyllysine.

This sequence belongs to the GcvT family. As to quaternary structure, monomer. It depends on FAD as a cofactor.

The protein localises to the mitochondrion. It carries out the reaction (6S)-5,6,7,8-tetrahydrofolyl-(gamma-L-Glu)(n) + N,N-dimethylglycine + oxidized [electron-transfer flavoprotein] + H(+) = (6R)-5,10-methylenetetrahydrofolyl-(gamma-L-Glu)(n) + sarcosine + reduced [electron-transfer flavoprotein]. It participates in amine and polyamine degradation; betaine degradation; sarcosine from betaine: step 2/2. Catalyzes the demethylation of N,N-dimethylglycine to sarcosine. Also has activity with sarcosine in vitro. This is Dimethylglycine dehydrogenase, mitochondrial (DMGDH) from Homo sapiens (Human).